Here is a 41-residue protein sequence, read N- to C-terminus: Large ribosomal subunit protein bL36 (41 aa).

Belongs to the bacterial ribosomal protein bL36 family.

The sequence is that of Large ribosomal subunit protein bL36 from Gluconobacter oxydans (strain 621H) (Gluconobacter suboxydans).